The primary structure comprises 448 residues: MSHRYIPLTEKDKQEMLQTIGAKSIGELFGDVPSDILLNRDLNIAEGEAETTLLRRLNRIASKNITKETHTSFLGAGVYDHYAPSVVDAMISRSEFYTAYTPYQPEISQGELQAIFEFQTLICELTDMDVANSSMYDGMTSFAEACILAFSQTKKNKIVVSKGLHYQALQVLHTYAKTRKEFEVVEIDLDGTVTDLKKLEAAVDDETAAVAVQYPNFYGSIEDLEKIQSFIEDKKALFIVYANPLALGLLTPPGSFGADIVVGDTQPFGIPAQFGGPHCGYFATTKKLMRKVPGRLVGQTQDDEGNRGFVLTLQAREQHIRRDKATSNICSNQALNALASSIAMSALGKQGIYDIAVQNIEHANYAKQQFIKKGFEVLDGTSFNEFVVKFDKPIQQVNEELVKYNIIGGFDLGVVSDDFKNHMLIAVTELRTKDEIDTFVEKAGELND.

The protein belongs to the GcvP family. N-terminal subunit subfamily. As to quaternary structure, the glycine cleavage system is composed of four proteins: P, T, L and H. In this organism, the P 'protein' is a heterodimer of two subunits.

The catalysed reaction is N(6)-[(R)-lipoyl]-L-lysyl-[glycine-cleavage complex H protein] + glycine + H(+) = N(6)-[(R)-S(8)-aminomethyldihydrolipoyl]-L-lysyl-[glycine-cleavage complex H protein] + CO2. The glycine cleavage system catalyzes the degradation of glycine. The P protein binds the alpha-amino group of glycine through its pyridoxal phosphate cofactor; CO(2) is released and the remaining methylamine moiety is then transferred to the lipoamide cofactor of the H protein. The chain is Probable glycine dehydrogenase (decarboxylating) subunit 1 from Staphylococcus aureus (strain Mu3 / ATCC 700698).